Here is a 90-residue protein sequence, read N- to C-terminus: Cell division topological specificity factor (90 aa).

Belongs to the MinE family.

In terms of biological role, prevents the cell division inhibition by proteins MinC and MinD at internal division sites while permitting inhibition at polar sites. This ensures cell division at the proper site by restricting the formation of a division septum at the midpoint of the long axis of the cell. The protein is Cell division topological specificity factor of Clostridium perfringens (strain SM101 / Type A).